We begin with the raw amino-acid sequence, 392 residues long: GTPase Obg (392 aa).

An Obg domain is found at 1-159 (MKFVDEATIL…RDLQLELMLL (159 aa)). Residues 127–148 (NTRFKSSVNRTPRQKTMGTPGD) form a disordered region. Polar residues predominate over residues 129-143 (RFKSSVNRTPRQKTM). The 174-residue stretch at 160-333 (ADVGMLGMPN…LCWDVMTFII (174 aa)) folds into the OBG-type G domain. Residues 166-173 (GMPNAGKS), 191-195 (FTTLV), 213-216 (DIPG), 283-286 (NKID), and 314-316 (SAA) contribute to the GTP site. Residues Ser-173 and Thr-193 each coordinate Mg(2+). Residues 362 to 386 (EEAEAEAEDDEDWDDDWDEDDEEGV) show a composition bias toward acidic residues. Positions 362 to 392 (EEAEAEAEDDEDWDDDWDEDDEEGVEFIYKR) are disordered.

This sequence belongs to the TRAFAC class OBG-HflX-like GTPase superfamily. OBG GTPase family. As to quaternary structure, monomer. Requires Mg(2+) as cofactor.

Its subcellular location is the cytoplasm. Functionally, an essential GTPase which binds GTP, GDP and possibly (p)ppGpp with moderate affinity, with high nucleotide exchange rates and a fairly low GTP hydrolysis rate. Plays a role in control of the cell cycle, stress response, ribosome biogenesis and in those bacteria that undergo differentiation, in morphogenesis control. This Klebsiella pneumoniae subsp. pneumoniae (strain ATCC 700721 / MGH 78578) protein is GTPase Obg.